The primary structure comprises 570 residues: Adenine deaminase (570 aa).

Belongs to the metallo-dependent hydrolases superfamily. Adenine deaminase family. Mn(2+) is required as a cofactor.

The catalysed reaction is adenine + H2O + H(+) = hypoxanthine + NH4(+). The sequence is that of Adenine deaminase from Petrotoga mobilis (strain DSM 10674 / SJ95).